The primary structure comprises 100 residues: UPF0251 protein VVA1436 (100 aa).

This sequence belongs to the UPF0251 family.

The sequence is that of UPF0251 protein VVA1436 from Vibrio vulnificus (strain YJ016).